A 146-amino-acid chain; its full sequence is Large ribosomal subunit protein uL15 (146 aa).

The span at 1–13 shows a compositional bias: basic and acidic residues; that stretch reads MKLHELKAAEGSR. The interval 1–56 is disordered; that stretch reads MKLHELKAAEGSRRVRNRVGRGAGSGNGKTSGRGQKGQKARSGGGVRPGFEGGQLP. Gly residues-rich tracts occupy residues 21-35 and 42-52; these read RGAG…GRGQ and SGGGVRPGFEG.

This sequence belongs to the universal ribosomal protein uL15 family. In terms of assembly, part of the 50S ribosomal subunit.

Binds to the 23S rRNA. The chain is Large ribosomal subunit protein uL15 from Staphylococcus haemolyticus (strain JCSC1435).